The chain runs to 406 residues: MVHCAGCKRPILDRFLLNVLDRAWHVKCVQCCECKCNLTEKCFSREGKLYCKNDFFRCFGTKCAGCAQGISPSDLVRRARSKVFHLNCFTCMMCNKQLSTGEELYIIDENKFVCKEDYLSNSSVAKENSLHSATTGSDPSLSPDSQDPSQDDAKDSESANVSDKEGGSNENDDQNLGAKRRGPRTTIKAKQLETLKAAFAATPKPTRHIREQLAQETGLNMRVIQVWFQNRRSKERRMKQLSALGARRHAFFRSPRRMRPLVDRLEPGELIPNGPFSFYGDYQSEYYGPGGNYDFFPQGPPSSQAQTPVDLPFVPSSGPSGTPLGGLDHPLPGHHPSSEAQRFTDILAHPPGDSPSPEPSLPGPLHSMSAEVFGPSPPFSSLSVNGGASYGNHLSHPPEMNEAAVW.

2 consecutive LIM zinc-binding domains span residues 4–54 (CAGC…CKND) and 63–117 (CAGC…CKED). Disordered stretches follow at residues 128-189 (NSLH…TIKA) and 294-372 (DFFP…SAEV). Over residues 137-148 (SDPSLSPDSQDP) the composition is skewed to low complexity. Over residues 151–167 (DDAKDSESANVSDKEGG) the composition is skewed to basic and acidic residues. Ser162 bears the Phosphoserine mark. The segment at residues 180–239 (RRGPRTTIKAKQLETLKAAFAATPKPTRHIREQLAQETGLNMRVIQVWFQNRRSKERRMK) is a DNA-binding region (homeobox). The segment covering 315–327 (PSSGPSGTPLGGL) has biased composition (low complexity). A compositionally biased stretch (pro residues) spans 352–362 (GDSPSPEPSLP).

Interacts with LDB1 via the tandem LIM domains.

The protein localises to the nucleus. Functionally, potential transcription factor. May play a role in early mesoderm formation and later in lateral mesoderm differentiation and neurogenesis. In Mesocricetus auratus (Golden hamster), this protein is LIM/homeobox protein Lhx1 (Lhx1).